We begin with the raw amino-acid sequence, 182 residues long: Dynactin subunit 5 (182 aa).

M1 is subject to N-acetylmethionine.

Belongs to the dynactin subunits 5/6 family. Dynactin subunit 5 subfamily. Subunit of dynactin, a multiprotein complex part of a tripartite complex with dynein and a adapter, such as BICDL1, BICD2 or HOOK3. The dynactin complex is built around ACTR1A/ACTB filament and consists of an actin-related filament composed of a shoulder domain, a pointed end and a barbed end. Its length is defined by its flexible shoulder domain. The soulder is composed of 2 DCTN1 subunits, 4 DCTN2 and 2 DCTN3. The 4 DCNT2 (via N-terminus) bind the ACTR1A filament and act as molecular rulers to determine the length. The pointed end is important for binding dynein-dynactin cargo adapters. Consists of 4 subunits: ACTR10, DCNT4, DCTN5 and DCTN6. Within the complex DCTN6 forms a heterodimer with DCTN5. The barbed end is composed of a CAPZA1:CAPZB heterodimers, which binds ACTR1A/ACTB filament and dynactin and stabilizes dynactin. Interacts with N4BP2L1.

It is found in the cytoplasm. Its subcellular location is the cytoskeleton. It localises to the chromosome. The protein localises to the centromere. The protein resides in the kinetochore. In terms of biological role, part of the dynactin complex that activates the molecular motor dynein for ultra-processive transport along microtubules. The protein is Dynactin subunit 5 of Homo sapiens (Human).